We begin with the raw amino-acid sequence, 227 residues long: Biosynthetic peptidoglycan transglycosylase (227 aa).

Residues 7 to 27 (VALLTLLLLVAAPYVLTLVYG) form a helical membrane-spanning segment.

It belongs to the glycosyltransferase 51 family.

It localises to the cell inner membrane. The catalysed reaction is [GlcNAc-(1-&gt;4)-Mur2Ac(oyl-L-Ala-gamma-D-Glu-L-Lys-D-Ala-D-Ala)](n)-di-trans,octa-cis-undecaprenyl diphosphate + beta-D-GlcNAc-(1-&gt;4)-Mur2Ac(oyl-L-Ala-gamma-D-Glu-L-Lys-D-Ala-D-Ala)-di-trans,octa-cis-undecaprenyl diphosphate = [GlcNAc-(1-&gt;4)-Mur2Ac(oyl-L-Ala-gamma-D-Glu-L-Lys-D-Ala-D-Ala)](n+1)-di-trans,octa-cis-undecaprenyl diphosphate + di-trans,octa-cis-undecaprenyl diphosphate + H(+). It participates in cell wall biogenesis; peptidoglycan biosynthesis. Functionally, peptidoglycan polymerase that catalyzes glycan chain elongation from lipid-linked precursors. This is Biosynthetic peptidoglycan transglycosylase from Rhodopseudomonas palustris (strain HaA2).